A 405-amino-acid polypeptide reads, in one-letter code: Endo-1,4-beta-xylanase 5 (405 aa).

Positions 1–22 (MTRLATLITLAGLLAVSPGAYA) are cleaved as a signal peptide. Asn27 and Asn69 each carry an N-linked (GlcNAc...) asparagine glycan. One can recognise a GH10 domain in the interval 32-352 (STGAEGLNSL…KPAYTSVSSL (321 aa)). The Proton donor role is filled by Glu166. Asn171 is a glycosylation site (N-linked (GlcNAc...) asparagine). Glu273 functions as the Nucleophile in the catalytic mechanism. A disulfide bridge links Cys302 with Cys308. Gly380 carries the GPI-anchor amidated glycine lipid modification. Positions 381-405 (AGRETVSIAGLTLALSSLAFGMFML) are cleaved as a propeptide — removed in mature form.

It belongs to the glycosyl hydrolase 10 (cellulase F) family.

It is found in the cell membrane. The protein resides in the secreted. The enzyme catalyses Endohydrolysis of (1-&gt;4)-beta-D-xylosidic linkages in xylans.. It participates in glycan degradation; xylan degradation. In terms of biological role, endo-1,4-beta-xylanase involved in the hydrolysis of xylan, a major structural heterogeneous polysaccharide found in plant biomass representing the second most abundant polysaccharide in the biosphere, after cellulose. This chain is Endo-1,4-beta-xylanase 5 (XYL5), found in Pyricularia grisea (Crabgrass-specific blast fungus).